The primary structure comprises 186 residues: ATP synthase subunit delta (186 aa).

The protein belongs to the ATPase delta chain family. As to quaternary structure, F-type ATPases have 2 components, F(1) - the catalytic core - and F(0) - the membrane proton channel. F(1) has five subunits: alpha(3), beta(3), gamma(1), delta(1), epsilon(1). F(0) has three main subunits: a(1), b(2) and c(10-14). The alpha and beta chains form an alternating ring which encloses part of the gamma chain. F(1) is attached to F(0) by a central stalk formed by the gamma and epsilon chains, while a peripheral stalk is formed by the delta and b chains.

Its subcellular location is the cell inner membrane. In terms of biological role, f(1)F(0) ATP synthase produces ATP from ADP in the presence of a proton or sodium gradient. F-type ATPases consist of two structural domains, F(1) containing the extramembraneous catalytic core and F(0) containing the membrane proton channel, linked together by a central stalk and a peripheral stalk. During catalysis, ATP synthesis in the catalytic domain of F(1) is coupled via a rotary mechanism of the central stalk subunits to proton translocation. Functionally, this protein is part of the stalk that links CF(0) to CF(1). It either transmits conformational changes from CF(0) to CF(1) or is implicated in proton conduction. The chain is ATP synthase subunit delta from Azorhizobium caulinodans (strain ATCC 43989 / DSM 5975 / JCM 20966 / LMG 6465 / NBRC 14845 / NCIMB 13405 / ORS 571).